Consider the following 694-residue polypeptide: Acetolactate synthase catalytic subunit, mitochondrial (694 aa).

The transit peptide at 1–42 (MLRSRQATNALRAVGQTRPLRSQTAVAFTQSLNKVPSNRRSE) directs the protein to the mitochondrion. The span at 45–58 (VATASSTASGAFNS) shows a compositional bias: low complexity. Positions 45–69 (VATASSTASGAFNSQVRPTPSPTFN) are disordered. The span at 59-69 (QVRPTPSPTFN) shows a compositional bias: polar residues. Glu140 is a binding site for thiamine diphosphate. FAD contacts are provided by residues Arg242, 358 to 379 (HGSA…LGGR), and 410 to 429 (EIMP…IVGD). Positions 505-585 (QHQMWTAQHF…VKVIVLNNEE (81 aa)) are thiamine pyrophosphate binding. Mg(2+)-binding residues include Asp556, Asn583, and Glu585.

Belongs to the TPP enzyme family. In terms of assembly, homodimer. The cofactor is Mg(2+). Thiamine diphosphate is required as a cofactor.

Its subcellular location is the mitochondrion. It catalyses the reaction 2 pyruvate + H(+) = (2S)-2-acetolactate + CO2. The catalysed reaction is 2-oxobutanoate + pyruvate + H(+) = (S)-2-ethyl-2-hydroxy-3-oxobutanoate + CO2. It functions in the pathway amino-acid biosynthesis; L-isoleucine biosynthesis; L-isoleucine from 2-oxobutanoate: step 1/4. It participates in amino-acid biosynthesis; L-valine biosynthesis; L-valine from pyruvate: step 1/4. In terms of biological role, acetolactate synthase catalytic subunit, mitochondrial; part of the gene cluster that mediates the biosynthesis of chlorflavonin, a fungal flavonoid with acetolactate synthase inhibitory activity. Is not direcly involved in chlorflavonin biosynthesis but acts as a self-resistant protein that effectively confers chlorflavonin resistance to the native host. As a catalytic subunit of mitochondrial acetolactate synthase, catalyzes the first of a series of common steps in the biosynthesis of the branched-chain amino acids. Catalyzes the irreversible decarboxylation of pyruvate to a bound hydroxyethyl group that then condenses with either a second pyruvate molecule to form 2-acetolactate (AL) or with 2-ketobutyrate to form 2-aceto-2-hydroxybutyrate (AHB). The first product is the precursor for valine and leucine biosynthesis, while the second leads to isoleucine. The protein is Acetolactate synthase catalytic subunit, mitochondrial of Aspergillus candidus.